The following is a 391-amino-acid chain: ATP phosphoribosyltransferase regulatory subunit (391 aa).

Belongs to the class-II aminoacyl-tRNA synthetase family. HisZ subfamily. Heteromultimer composed of HisG and HisZ subunits.

The protein resides in the cytoplasm. It functions in the pathway amino-acid biosynthesis; L-histidine biosynthesis; L-histidine from 5-phospho-alpha-D-ribose 1-diphosphate: step 1/9. Required for the first step of histidine biosynthesis. May allow the feedback regulation of ATP phosphoribosyltransferase activity by histidine. This chain is ATP phosphoribosyltransferase regulatory subunit, found in Prochlorococcus marinus (strain NATL2A).